The primary structure comprises 391 residues: Homocysteine-responsive endoplasmic reticulum-resident ubiquitin-like domain member 1 protein (391 aa).

The residue at position 1 (methionine 1) is an N-acetylmethionine. The Cytoplasmic portion of the chain corresponds to 1–263; sequence MEPEPQPEPV…VEEDDEINRD (263 aa). Positions 10 to 72 constitute a Ubiquitin-like domain; it reads VTLLVKSPNQ…LLDHQCLQDL (63 aa). Residues 90–126 are disordered; sequence NPSKMPETSTKGAESTEQPDNSNQTQHPGDSSSDGLR. The segment covering 95-124 has biased composition (polar residues); it reads PETSTKGAESTEQPDNSNQTQHPGDSSSDG. The tract at residues 115–200 is interaction with UBQLN1; that stretch reads QHPGDSSSDG…ASGTFVPTPS (86 aa). Serine 135 bears the Phosphoserine mark. The helical transmembrane segment at 264–284 threads the bilayer; the sequence is WLDWTYSAATFSVFLSILYFY. Residues 285–289 are Lumenal-facing; the sequence is SSLSR. Residues 290–310 traverse the membrane as a helical segment; that stretch reads FLMVMGATVVMYLHHVGWFPF. Residues 311-391 are Cytoplasmic-facing; the sequence is RQRPVQNFPD…LPEGPPALAN (81 aa). The interval 317 to 361 is disordered; that stretch reads NFPDDGGPRDAANQDPNNNLQGGMDPEMEDPNRLPPDREVLDPEH. A compositionally biased stretch (basic and acidic residues) spans 346–361; sequence DPNRLPPDREVLDPEH.

Interacts with PSEN1 and PSEN2. Interacts with UBXN6. Interacts with UBQLN1, UBQLN2 and UBQLN4. Component of the HRD1 complex, which comprises at least SYNV1/HRD1, FAM8A1, HERPUD1/HERP, OS9, SEL1L and UBE2J1. FAM8A1 binding to SYNV1 may promote recruitment of HERPUD1 to the HRD1 complex.

The protein localises to the endoplasmic reticulum membrane. Functionally, component of the endoplasmic reticulum quality control (ERQC) system also called ER-associated degradation (ERAD) involved in ubiquitin-dependent degradation of misfolded endoplasmic reticulum proteins. Binds to ubiquilins and this interaction is required for efficient degradation of CD3D via the ERAD pathway. This Mus musculus (Mouse) protein is Homocysteine-responsive endoplasmic reticulum-resident ubiquitin-like domain member 1 protein (Herpud1).